Here is a 127-residue protein sequence, read N- to C-terminus: UPF0102 protein Cpha266_0037 (127 aa).

This sequence belongs to the UPF0102 family.

In Chlorobium phaeobacteroides (strain DSM 266 / SMG 266 / 2430), this protein is UPF0102 protein Cpha266_0037.